The primary structure comprises 208 residues: UPF0711 protein C18orf21 homolog (208 aa).

Over residues 123 to 137 (SKHKSTPGSASKHRT) the composition is skewed to basic residues. 2 disordered regions span residues 123–180 (SKHK…KSSP) and 189–208 (MLEN…LSSL). Over residues 138-152 (PQTVNWATPKSVANR) the composition is skewed to polar residues. Low complexity predominate over residues 153-180 (TPSSTPRSASSNTSSSSSSKSSSVKSSP).

Belongs to the UPF0711 family.

This Danio rerio (Zebrafish) protein is UPF0711 protein C18orf21 homolog.